Here is a 446-residue protein sequence, read N- to C-terminus: Chromosomal replication initiator protein DnaA (446 aa).

The segment at 1–72 (MENILDLWNQ…ADTIYELTGE (72 aa)) is domain I, interacts with DnaA modulators. The interval 72 to 109 (EELSVKFVIPQNQDEENFLPKPQVKKAAKEEPSDFPQS) is domain II. A domain III, AAA+ region region spans residues 110–326 (MLNPKYTFDT…GALIRVVAYS (217 aa)). 4 residues coordinate ATP: Gly154, Gly156, Lys157, and Thr158. The interval 327 to 446 (SLINKDINAD…QVKEIKELLK (120 aa)) is domain IV, binds dsDNA.

It belongs to the DnaA family. As to quaternary structure, oligomerizes as a right-handed, spiral filament on DNA at oriC.

Its subcellular location is the cytoplasm. Functionally, plays an essential role in the initiation and regulation of chromosomal replication. ATP-DnaA binds to the origin of replication (oriC) to initiate formation of the DNA replication initiation complex once per cell cycle. Binds the DnaA box (a 9 base pair repeat at the origin) and separates the double-stranded (ds)DNA. Forms a right-handed helical filament on oriC DNA; dsDNA binds to the exterior of the filament while single-stranded (ss)DNA is stabiized in the filament's interior. The ATP-DnaA-oriC complex binds and stabilizes one strand of the AT-rich DNA unwinding element (DUE), permitting loading of DNA polymerase. After initiation quickly degrades to an ADP-DnaA complex that is not apt for DNA replication. Binds acidic phospholipids. The chain is Chromosomal replication initiator protein DnaA from Bacillus velezensis (strain DSM 23117 / BGSC 10A6 / LMG 26770 / FZB42) (Bacillus amyloliquefaciens subsp. plantarum).